The primary structure comprises 520 residues: GMP synthase [glutamine-hydrolyzing] (520 aa).

The region spanning 12 to 205 (KIIVLDYGSQ…AISICGARGD (194 aa)) is the Glutamine amidotransferase type-1 domain. The active-site Nucleophile is cysteine 89. Catalysis depends on residues histidine 179 and glutamate 181. The GMPS ATP-PPase domain maps to 206 to 395 (WSMDNFIDME…LGMPEEIVWR (190 aa)). Residue 233 to 239 (SGGVDSS) participates in ATP binding.

In terms of assembly, homodimer.

The enzyme catalyses XMP + L-glutamine + ATP + H2O = GMP + L-glutamate + AMP + diphosphate + 2 H(+). The protein operates within purine metabolism; GMP biosynthesis; GMP from XMP (L-Gln route): step 1/1. Functionally, catalyzes the synthesis of GMP from XMP. This Streptococcus pyogenes serotype M3 (strain SSI-1) protein is GMP synthase [glutamine-hydrolyzing].